An 80-amino-acid chain; its full sequence is Putative membrane protein insertion efficiency factor (80 aa).

This sequence belongs to the UPF0161 family.

The protein resides in the cell inner membrane. Could be involved in insertion of integral membrane proteins into the membrane. The sequence is that of Putative membrane protein insertion efficiency factor from Kosmotoga olearia (strain ATCC BAA-1733 / DSM 21960 / TBF 19.5.1).